Consider the following 457-residue polypeptide: BAG family molecular chaperone regulator 4 (457 aa).

The interval 1 to 101 (MSALRRSGYG…QPPYPSYNSN (101 aa)) is disordered. Ser-7 is modified (phosphoserine). Low complexity predominate over residues 8–20 (GYGPSDGPSYGRY). Residues 30 to 47 (VHPPPPLYPLRPEPPQPP) are compositionally biased toward pro residues. Arg-40, Arg-53, and Arg-108 each carry omega-N-methylarginine. Disordered stretches follow at residues 113–136 (YPST…NGAY), 166–333 (STEV…DDSD), and 347–377 (LYGN…ESTP). Residues 166 to 182 (STEVPSTYRSSGNSPTP) show a composition bias toward polar residues. Position 185 is an omega-N-methylarginine (Arg-185). Composition is skewed to low complexity over residues 274-284 (STSPWPSSGSP) and 294-308 (QPKD…SDQS). Polar residues-rich tracts occupy residues 320–333 (QYES…DDSD) and 347–365 (LYGN…SSSL). The region spanning 379–456 (SIKKIIHVLE…AILEKLEKKG (78 aa)) is the BAG domain.

Binds to the ATPase domain of HSP/HSC70 chaperones. Binds to the death domain of TNFRSF1A in the absence of TNF and thereby prevents binding of adapter molecules such as TRADD or TRAF2. Binds to the death domain of TNFRSF12. Interacts with PRKN. In terms of tissue distribution, ubiquitous.

Its subcellular location is the cytoplasm. Functionally, inhibits the chaperone activity of HSP70/HSC70 by promoting substrate release. Prevents constitutive TNFRSF1A signaling. Negative regulator of PRKN translocation to damaged mitochondria. This chain is BAG family molecular chaperone regulator 4 (BAG4), found in Homo sapiens (Human).